Consider the following 234-residue polypeptide: Phosphoribosylaminoimidazole-succinocarboxamide synthase (234 aa).

It belongs to the SAICAR synthetase family.

The catalysed reaction is 5-amino-1-(5-phospho-D-ribosyl)imidazole-4-carboxylate + L-aspartate + ATP = (2S)-2-[5-amino-1-(5-phospho-beta-D-ribosyl)imidazole-4-carboxamido]succinate + ADP + phosphate + 2 H(+). Its pathway is purine metabolism; IMP biosynthesis via de novo pathway; 5-amino-1-(5-phospho-D-ribosyl)imidazole-4-carboxamide from 5-amino-1-(5-phospho-D-ribosyl)imidazole-4-carboxylate: step 1/2. The protein is Phosphoribosylaminoimidazole-succinocarboxamide synthase of Pyrococcus furiosus (strain ATCC 43587 / DSM 3638 / JCM 8422 / Vc1).